A 340-amino-acid chain; its full sequence is Glycerol-3-phosphate dehydrogenase [NAD(P)+] (340 aa).

Positions 13, 14, and 108 each coordinate NADPH. Residues Lys108, Gly137, and Thr139 each coordinate sn-glycerol 3-phosphate. Ala141 contacts NADPH. Sn-glycerol 3-phosphate-binding residues include Lys193, Asp246, Ser256, Arg257, and Asn258. Lys193 (proton acceptor) is an active-site residue. Arg257 contacts NADPH. Positions 281 and 283 each coordinate NADPH.

It belongs to the NAD-dependent glycerol-3-phosphate dehydrogenase family.

The protein resides in the cytoplasm. The enzyme catalyses sn-glycerol 3-phosphate + NAD(+) = dihydroxyacetone phosphate + NADH + H(+). It carries out the reaction sn-glycerol 3-phosphate + NADP(+) = dihydroxyacetone phosphate + NADPH + H(+). It functions in the pathway membrane lipid metabolism; glycerophospholipid metabolism. In terms of biological role, catalyzes the reduction of the glycolytic intermediate dihydroxyacetone phosphate (DHAP) to sn-glycerol 3-phosphate (G3P), the key precursor for phospholipid synthesis. The sequence is that of Glycerol-3-phosphate dehydrogenase [NAD(P)+] from Bartonella henselae (strain ATCC 49882 / DSM 28221 / CCUG 30454 / Houston 1) (Rochalimaea henselae).